The sequence spans 28 residues: Cruzioseptin-10 (28 aa).

In terms of tissue distribution, expressed by the skin glands.

It is found in the secreted. Functionally, has antimicrobial activity. This is Cruzioseptin-10 from Cruziohyla calcarifer (Splendid leaf frog).